Reading from the N-terminus, the 677-residue chain is Transcription factor IIIB 90 kDa subunit (677 aa).

Residues 2–33 (TGRVCRGCGGTDIELDAARGDAVCTACGSVLE) form a TFIIB-type zinc finger. Residues cysteine 6, cysteine 9, cysteine 25, and cysteine 28 each contribute to the Zn(2+) site. 2 repeat units span residues 91 to 172 (RHIH…LLAR) and 185 to 269 (LYIP…EFED). Disordered stretches follow at residues 340-368 (KGGL…TEDE) and 385-413 (LLGG…SLLD). Threonine 365 carries the phosphothreonine modification. At serine 450 the chain carries Phosphoserine. Disordered stretches follow at residues 501-521 (YKEH…ASTA) and 544-653 (RGLS…EDGE). Serine 553 bears the Phosphoserine mark. A compositionally biased stretch (acidic residues) spans 640–653 (EEADEEEPDEEDGE).

It belongs to the TFIIB family. As to quaternary structure, TFIIIB comprises at least the TATA-binding protein (TBP) and the B-related factor 1 (BRF1/TFIIIB90). Interacts with BDP1. Interacts with MAF1.

Its subcellular location is the nucleus. Its function is as follows. General activator of RNA polymerase which utilizes different TFIIIB complexes at structurally distinct promoters. The isoform 1 is involved in the transcription of tRNA, adenovirus VA1, 7SL and 5S RNA. Isoform 2 is required for transcription of the U6 promoter. The sequence is that of Transcription factor IIIB 90 kDa subunit (BRF1) from Homo sapiens (Human).